A 149-amino-acid chain; its full sequence is RALGPLFPSRLFDQYLGEGLFDYDLLPFFSSTISPYYRHSLFRTVLESGISEVRSDRDKFTILLDVKHFSPEDLSVKIMDDFVEIHGKHNERQDDHGYISREFHRRYRLPSNVDQSAITCSLSADGMLTFSGPKVQSNMDTSYSERPIP.

One can recognise a sHSP domain in the interval 41-149; that stretch reads LFRTVLESGI…DTSYSERPIP (109 aa). The Zn(2+) site is built by His-89, Glu-91, and His-96.

The protein belongs to the small heat shock protein (HSP20) family. In terms of assembly, heteropolymer composed of three CRYAA and one CRYAB subunits. Inter-subunit bridging via zinc ions enhances stability, which is crucial as there is no protein turn over in the lens. Zinc coordination is achieved at least by His-89, Glu-91 and His-96. His-83 and Glu-85 come from the same molecule within the oligomer, while His-90 residue is provided by another molecule. Can also form homodimers and homotetramers (dimers of dimers) which serve as the building blocks of homooligomers.

The protein resides in the cytoplasm. It is found in the nucleus. In terms of biological role, contributes to the transparency and refractive index of the lens. May act as a chaperone, preventing aggregation of various proteins under a wide range of stress conditions. The polypeptide is Alpha-crystallin A chain (CRYAA) (Trachemys scripta elegans (Red-eared slider turtle)).